A 167-amino-acid polypeptide reads, in one-letter code: MVKILVLALVFSLAHAQDFAELQGKWYTIVIAADNLEKIEEGGPLRFYFRHIDCYKNCSEMEITFYVITNNQCSKTTVIGYLKGNGTYQTQFEGNNIFQPLYITSDKIFFTNKNMDRAGQETNMIVVAGKGNALTPEENEILVQFAHEKKIPVENILNILATDTCPE.

The signal sequence occupies residues 1 to 16 (MVKILVLALVFSLAHA). Residue Gln-17 is modified to Pyrrolidone carboxylic acid. 2 cysteine pairs are disulfide-bonded: Cys-54–Cys-58 and Cys-73–Cys-165. N-linked (GlcNAc...) asparagine glycans are attached at residues Asn-57 and Asn-85.

It belongs to the calycin superfamily. Lipocalin family. As to expression, expressed in the vagina, uterus, and Bartholin's glands of female hamsters. Secreted in vaginal discharge.

It localises to the secreted. Functionally, acts as an aphrodisiac pheromone, reliably eliciting copulatory behavior from male hamster. The polypeptide is Aphrodisin (Mesocricetus auratus (Golden hamster)).